A 58-amino-acid chain; its full sequence is Large ribosomal subunit protein uL30 (58 aa).

Belongs to the universal ribosomal protein uL30 family. In terms of assembly, part of the 50S ribosomal subunit.

The protein is Large ribosomal subunit protein uL30 of Phocaeicola vulgatus (strain ATCC 8482 / DSM 1447 / JCM 5826 / CCUG 4940 / NBRC 14291 / NCTC 11154) (Bacteroides vulgatus).